A 92-amino-acid polypeptide reads, in one-letter code: Phospholemman (92 aa).

An N-terminal signal peptide occupies residues Met-1–Ala-20. Topologically, residues Glu-21 to Thr-35 are extracellular. A helical membrane pass occupies residues Leu-36 to Leu-56. The Cytoplasmic portion of the chain corresponds to Ser-57–Arg-92. The S-palmitoyl cysteine moiety is linked to residue Cys-60. Cys-62 bears the S-glutathionyl cysteine; alternate mark. A lipid anchor (S-palmitoyl cysteine; alternate) is attached at Cys-62. Positions Gln-66–Arg-92 are disordered. Phosphothreonine is present on Thr-79. Position 82 is a phosphoserine (Ser-82). Ser-83 carries the phosphoserine; by PKA and PKC modification. Over residues Ser-83 to Arg-92 the composition is skewed to basic residues. A Phosphoserine; by PKA modification is found at Ser-88. Residue Thr-89 is modified to Phosphothreonine; by PKC.

Belongs to the FXYD family. Homotetramer. Monomer. Regulatory subunit of the sodium/potassium-transporting ATPase (NKA) which is composed of a catalytic alpha subunit, a non-catalytic beta subunit and an additional regulatory subunit. The monomeric form associates with NKA while the oligomeric form does not. Interacts with the catalytic alpha-1 subunit ATP1A1. Also interacts with the catalytic alpha-2 and alpha-3 subunits ATP1A2 and ATP1A3. Very little interaction with ATP1A1, ATP1A2 or ATP1A3 when phosphorylated at Ser-83. Interacts with the non-catalytic beta-1 subunit ATP1B1. Oxidative stress decreases interaction with ATP1A1 but increases interaction with ATP1B1. Post-translationally, major plasma membrane substrate for cAMP-dependent protein kinase (PKA) and protein kinase C (PKC) in several different tissues. Phosphorylated in response to insulin and adrenergic stimulation. Phosphorylation at Ser-88 stimulates sodium/potassium-transporting ATPase activity while the unphosphorylated form inhibits sodium/potassium-transporting ATPase activity. Phosphorylation increases tetramerization, decreases binding to ATP1A1 and reduces inhibition of ATP1A1 activity. Phosphorylation at Ser-83 leads to greatly reduced interaction with ATP1A1, ATP1A2 and ATP1A3. May be phosphorylated by DMPK. In terms of processing, palmitoylation increases half-life and stability and is enhanced upon phosphorylation at Ser-88 by PKA. In terms of tissue distribution, in adult brain, highest levels are found in the cerebellum and in the lateral, third and fourth ventricles of the choroid plexus (at protein level). Also detected in cells of a portion of the ependymal lining of the lateral ventricle on its rostral surface posterior to the caudate putamen (at protein level). Expressed in a subset of neurons which secrete gonadotropin-releasing hormone.

Its subcellular location is the cell membrane. It is found in the sarcolemma. The protein localises to the apical cell membrane. It localises to the membrane. The protein resides in the caveola. Its subcellular location is the T-tubule. Associates with and regulates the activity of the sodium/potassium-transporting ATPase (NKA) which transports Na(+) out of the cell and K(+) into the cell. Inhibits NKA activity in its unphosphorylated state and stimulates activity when phosphorylated. Reduces glutathionylation of the NKA beta-1 subunit ATP1B1, thus reversing glutathionylation-mediated inhibition of ATP1B1. Contributes to female sexual development by maintaining the excitability of neurons which secrete gonadotropin-releasing hormone. The protein is Phospholemman of Rattus norvegicus (Rat).